We begin with the raw amino-acid sequence, 358 residues long: Ion-translocating oxidoreductase complex subunit D (358 aa).

Helical transmembrane passes span 19–39, 41–61, 79–99, and 125–145; these read IMLW…YYFG, GVLL…FIAI, LTAL…VIII, and IGYV…MPPI. T186 is subject to FMN phosphoryl threonine. 5 consecutive transmembrane segments (helical) span residues 220-240, 248-268, 271-291, 297-317, and 321-341; these read FAQG…FLIL, IPVA…FTGF, LSAI…FIAT, SITP…VYLI, and GNYP…VPLI.

Belongs to the NqrB/RnfD family. As to quaternary structure, the complex is composed of six subunits: RnfA, RnfB, RnfC, RnfD, RnfE and RnfG. The cofactor is FMN.

The protein localises to the cell inner membrane. Functionally, part of a membrane-bound complex that couples electron transfer with translocation of ions across the membrane. The polypeptide is Ion-translocating oxidoreductase complex subunit D (Haemophilus influenzae (strain PittEE)).